A 258-amino-acid chain; its full sequence is Trifolitoxin-processing protein TfxF (258 aa).

The actions of the proteins TfxB, TfxD and TfxF are implicated in the processing of the inactive trifolitoxin (TfxA) precursor into the active peptide. This chain is Trifolitoxin-processing protein TfxF (tfxF), found in Rhizobium leguminosarum bv. trifolii.